Consider the following 387-residue polypeptide: MNVFPKKIMLLGSGELGKEVAIAAKRLGCYVIACDRYNDAPAMQIADQFNVFNMNNGSELKEVIYKCNPDIIIPEIEALAVDVLKEIEQKITVIPNSRATAITMNRDKIRDLASNELNIRTAKFSYAVNQSELDLHAETIGYPLLIKPVMSSSGKGQSLVKNKNDLAQAWNLAIEKSRGKSNKIILEEFIDFDLEITLLTIRQSNGKTLFCAPIGHEQKNGDYQCSWQPAELTESVLEKAQQIAKRVTDNLGGVGLFGVEFFIKGEEVIFSELSPRPHDTGLVTLISQNLNEFELHLRAVLGIPIPEIVCHEASASRVILASMETTDVAFTGLEQALSQSNTNVFMFGKPSSTEGRRMGVAVAKAETIDEARIKADNAAQSVQFINE.

Residues 15–16 (EL) and Glu-75 contribute to the N(1)-(5-phospho-beta-D-ribosyl)glycinamide site. ATP is bound by residues Arg-106, Lys-147, 152 to 157 (SSGKGQ), 187 to 190 (EEFI), and Glu-195. The ATP-grasp domain occupies 111–301 (DLASNELNIR…EFELHLRAVL (191 aa)). 2 residues coordinate Mg(2+): Glu-260 and Glu-272. Residues Asp-279, Lys-349, and 356 to 357 (RR) each bind N(1)-(5-phospho-beta-D-ribosyl)glycinamide.

This sequence belongs to the PurK/PurT family. As to quaternary structure, homodimer.

The enzyme catalyses N(1)-(5-phospho-beta-D-ribosyl)glycinamide + formate + ATP = N(2)-formyl-N(1)-(5-phospho-beta-D-ribosyl)glycinamide + ADP + phosphate + H(+). Its pathway is purine metabolism; IMP biosynthesis via de novo pathway; N(2)-formyl-N(1)-(5-phospho-D-ribosyl)glycinamide from N(1)-(5-phospho-D-ribosyl)glycinamide (formate route): step 1/1. Involved in the de novo purine biosynthesis. Catalyzes the transfer of formate to 5-phospho-ribosyl-glycinamide (GAR), producing 5-phospho-ribosyl-N-formylglycinamide (FGAR). Formate is provided by PurU via hydrolysis of 10-formyl-tetrahydrofolate. The polypeptide is Formate-dependent phosphoribosylglycinamide formyltransferase (Prochlorococcus marinus (strain NATL2A)).